A 640-amino-acid chain; its full sequence is Threonine--tRNA ligase (640 aa).

The region spanning 1-61 is the TGS domain; it reads MPTITLPDGS…ENDASLQIIT (61 aa). A catalytic region spans residues 242–533; the sequence is DHRKIGKRLG…LIEHYEGAFP (292 aa). Zn(2+) contacts are provided by Cys333, His384, and His510.

Belongs to the class-II aminoacyl-tRNA synthetase family. Homodimer. It depends on Zn(2+) as a cofactor.

The protein localises to the cytoplasm. The enzyme catalyses tRNA(Thr) + L-threonine + ATP = L-threonyl-tRNA(Thr) + AMP + diphosphate + H(+). Catalyzes the attachment of threonine to tRNA(Thr) in a two-step reaction: L-threonine is first activated by ATP to form Thr-AMP and then transferred to the acceptor end of tRNA(Thr). Also edits incorrectly charged L-seryl-tRNA(Thr). The polypeptide is Threonine--tRNA ligase (Pseudomonas savastanoi pv. phaseolicola (strain 1448A / Race 6) (Pseudomonas syringae pv. phaseolicola (strain 1448A / Race 6))).